The sequence spans 244 residues: INO80 complex subunit E (244 aa).

A coiled-coil region spans residues 10–54; that stretch reads DYKKKYRNLKRKLKFLIYEHECFQEELRKAQRKLLKVSRDKSFLL. Disordered regions lie at residues 59-187 and 222-244; these read QYEN…PLTF and FSDAGSGDDALDGDDDLVIDIPE. Composition is skewed to low complexity over residues 99–115 and 122–136; these read PPLGGAPSPSSLSLPPS and ASRAPSPYLSSLASP. Residues 157–171 show a composition bias toward basic residues; sequence RPKREKRPRLPRKLK. Glycyl lysine isopeptide (Lys-Gly) (interchain with G-Cter in SUMO2) cross-links involve residues Lys-159 and Lys-171. The span at 230–244 shows a compositional bias: acidic residues; the sequence is DALDGDDDLVIDIPE.

In terms of assembly, component of the chromatin remodeling INO80 complex; specifically part of a complex module associated with the N-terminus of INO80.

Its subcellular location is the nucleus. Its function is as follows. Putative regulatory component of the chromatin remodeling INO80 complex which is involved in transcriptional regulation, DNA replication and probably DNA repair. In Bos taurus (Bovine), this protein is INO80 complex subunit E (INO80E).